Consider the following 713-residue polypeptide: Methionine--tRNA ligase (713 aa).

The 'HIGH' region signature appears at 31–41 (PYANGSIHLGH). Positions 162, 165, 175, and 178 each coordinate Zn(2+). The 'KMSKS' region signature appears at 348–352 (KMSKS). Lysine 351 contacts ATP. A tRNA-binding domain is found at 609–713 (DFAKIDLRIV…DGAKAGMRVK (105 aa)).

The protein belongs to the class-I aminoacyl-tRNA synthetase family. MetG type 1 subfamily. As to quaternary structure, homodimer. The cofactor is Zn(2+).

The protein resides in the cytoplasm. It carries out the reaction tRNA(Met) + L-methionine + ATP = L-methionyl-tRNA(Met) + AMP + diphosphate. In terms of biological role, is required not only for elongation of protein synthesis but also for the initiation of all mRNA translation through initiator tRNA(fMet) aminoacylation. The polypeptide is Methionine--tRNA ligase (Colwellia psychrerythraea (strain 34H / ATCC BAA-681) (Vibrio psychroerythus)).